The following is a 147-amino-acid chain: MATECPPKMILRKSEKLDKDASSKFLNRYIQTIERFQDEKSGSESVLSQLNRVLMYLKGEEIPLISLNLPVQGPPTEELIIPPEEMLETKEEESLKHAREENDDLHLDKETKKRLKKEKKKAARREKEEARKAKADTTQGVGEKEQS.

Residues 71–147 (VQGPPTEELI…TQGVGEKEQS (77 aa)) form a disordered region. A compositionally biased stretch (low complexity) spans 74 to 84 (PPTEELIIPPE). Residues 87 to 111 (LETKEEESLKHAREENDDLHLDKET) show a composition bias toward basic and acidic residues. Over residues 112 to 124 (KKRLKKEKKKAAR) the composition is skewed to basic residues. A compositionally biased stretch (basic and acidic residues) spans 125-135 (REKEEARKAKA).

Component of the RNA polymerase I (Pol I) complex consisting of 14 subunits. Part of a Pol I subcomplex consisting of the subunits A14 and A43. Interacts with rpa43. Phosphorylated.

It localises to the nucleus. Its subcellular location is the nucleolus. Its function is as follows. DNA-dependent RNA polymerase catalyzes the transcription of DNA into RNA using the four ribonucleoside triphosphates as substrates. Component of RNA polymerase I which synthesizes ribosomal RNA precursors. A14 seems to play a role in the stability of Pol I subunit A43 and association of rrn3 to Pol I. This is DNA-directed RNA polymerase I subunit rpa14 (ker1) from Schizosaccharomyces pombe (strain 972 / ATCC 24843) (Fission yeast).